A 384-amino-acid chain; its full sequence is Cytochrome b (384 aa).

The next 4 membrane-spanning stretches (helical) occupy residues Leu32 to Met52, Trp76 to Gly98, Val113 to Cys133, and Phe179 to Met199. Positions 82 and 96 each coordinate heme b. Heme b contacts are provided by His183 and His197. His202 contributes to the a ubiquinone binding site. 4 helical membrane-spanning segments follow: residues Phe225–Phe245, Leu289–Asp309, Leu321–Glu341, and Phe348–Pro368.

It belongs to the cytochrome b family. As to quaternary structure, fungal cytochrome b-c1 complex contains 10 subunits; 3 respiratory subunits, 2 core proteins and 5 low-molecular weight proteins. Cytochrome b-c1 complex is a homodimer. Heme b is required as a cofactor.

The protein resides in the mitochondrion inner membrane. In terms of biological role, component of the ubiquinol-cytochrome c reductase complex (complex III or cytochrome b-c1 complex) that is part of the mitochondrial respiratory chain. The b-c1 complex mediates electron transfer from ubiquinol to cytochrome c. Contributes to the generation of a proton gradient across the mitochondrial membrane that is then used for ATP synthesis. The polypeptide is Cytochrome b (COB) (Eremothecium gossypii (strain ATCC 10895 / CBS 109.51 / FGSC 9923 / NRRL Y-1056) (Yeast)).